A 345-amino-acid polypeptide reads, in one-letter code: NADH-ubiquinone oxidoreductase chain 2 (345 aa).

Transmembrane regions (helical) follow at residues 1–21 (MNPL…ILTT), 26–46 (WVSA…IISM), 60–80 (FLIQ…NAHL), 96–115 (IALT…HFWL), 122–144 (VPIL…LLIM), 148–170 (LIPT…LGGL), 201–223 (TLLN…HLTM), 242–262 (SLFL…GFIP), 274–294 (NLTP…MFYL), and 323–343 (TSTL…TPTL).

This sequence belongs to the complex I subunit 2 family.

The protein localises to the mitochondrion inner membrane. The catalysed reaction is a ubiquinone + NADH + 5 H(+)(in) = a ubiquinol + NAD(+) + 4 H(+)(out). In terms of biological role, core subunit of the mitochondrial membrane respiratory chain NADH dehydrogenase (Complex I) that is believed to belong to the minimal assembly required for catalysis. Complex I functions in the transfer of electrons from NADH to the respiratory chain. The immediate electron acceptor for the enzyme is believed to be ubiquinone. This is NADH-ubiquinone oxidoreductase chain 2 (MT-ND2) from Varanus nebulosus (Clouded monitor).